The chain runs to 271 residues: DNA repair protein RecO (271 aa).

Positions 248 to 271 (AVGVEDSVRQDGDRDSTTRTPSSA) are disordered. Residues 253 to 264 (DSVRQDGDRDST) are compositionally biased toward basic and acidic residues.

It belongs to the RecO family.

Functionally, involved in DNA repair and RecF pathway recombination. This is DNA repair protein RecO from Rhodococcus opacus (strain B4).